A 723-amino-acid polypeptide reads, in one-letter code: Catalase-peroxidase (723 aa).

A cross-link (tryptophyl-tyrosyl-methioninium (Trp-Tyr) (with M-251)) is located at residues Trp-96–Tyr-225. His-97 acts as the Proton acceptor in catalysis. Residues Tyr-225–Met-251 constitute a cross-link (tryptophyl-tyrosyl-methioninium (Tyr-Met) (with W-96)). A heme b-binding site is contributed by His-266.

Belongs to the peroxidase family. Peroxidase/catalase subfamily. In terms of assembly, homodimer or homotetramer. The cofactor is heme b. Formation of the three residue Trp-Tyr-Met cross-link is important for the catalase, but not the peroxidase activity of the enzyme.

The enzyme catalyses H2O2 + AH2 = A + 2 H2O. It catalyses the reaction 2 H2O2 = O2 + 2 H2O. In terms of biological role, bifunctional enzyme with both catalase and broad-spectrum peroxidase activity. The chain is Catalase-peroxidase from Alkalilimnicola ehrlichii (strain ATCC BAA-1101 / DSM 17681 / MLHE-1).